A 791-amino-acid chain; its full sequence is Nuclear cap-binding protein subunit 1-A (791 aa).

Residues 1–24 (MSRRRHSDENDGGQAHKRRKTSEP) form a disordered region. Positions 28–240 (EDRLESLICR…CLWAQIQKLK (213 aa)) constitute an MIF4G domain. A coiled-coil region spans residues 641-714 (LHSTIRKMNK…SEQKNLFLVI (74 aa)). A disordered region spans residues 664 to 687 (QRLAKQHKHRDSDDNDEDSGRKDG).

Belongs to the NCBP1 family. In terms of assembly, component of the nuclear cap-binding complex (CBC), a heterodimer composed of ncbp1/cbp80 and ncbp2/cbp20 that interacts with m7GpppG-capped RNA. Component of an alternative nuclear cap-binding complex (CBC) composed of ncbp1/cbp80 and ncbp3.

The protein localises to the nucleus. Its subcellular location is the cytoplasm. Functionally, component of the cap-binding complex (CBC), which binds cotranscriptionally to the 5'-cap of pre-mRNAs and is involved in various processes such as pre-mRNA splicing, translation regulation, nonsense-mediated mRNA decay, RNA-mediated gene silencing (RNAi) by microRNAs (miRNAs) and mRNA export. The CBC complex is involved in mRNA export from the nucleus, leading to the recruitment of the mRNA export machinery to the 5'-end of mRNA and to mRNA export in a 5' to 3' direction through the nuclear pore. The CBC complex is also involved in mediating U snRNA and intronless mRNAs export from the nucleus. The CBC complex is essential for a pioneer round of mRNA translation, before steady state translation when the CBC complex is replaced by cytoplasmic cap-binding protein eIF4E. The pioneer round of mRNA translation mediated by the CBC complex plays a central role in nonsense-mediated mRNA decay (NMD), NMD only taking place in mRNAs bound to the CBC complex, but not on eIF4E-bound mRNAs. The CBC complex enhances NMD in mRNAs containing at least one exon-junction complex (EJC), promoting the interaction between UPF1 and UPF2. The CBC complex is also involved in 'failsafe' NMD, which is independent of the EJC complex, while it does not participate in Staufen-mediated mRNA decay (SMD). During cell proliferation, the CBC complex is also involved in microRNAs (miRNAs) biogenesis via its interaction with SRRT/ARS2 and is required for miRNA-mediated RNA interference. The CBC complex also acts as a negative regulator of parn, thereby acting as an inhibitor of mRNA deadenylation. In the CBC complex, NCBP1/CBP80 does not bind directly capped RNAs (m7GpppG-capped RNA) but is required to stabilize the movement of the N-terminal loop of NCBP2/CBP20 and lock the CBC into a high affinity cap-binding state with the cap structure. Associates with NCBP3 to form an alternative cap-binding complex (CBC) which plays a key role in mRNA export. The conventional CBC with NCBP2 binds both small nuclear RNA (snRNA) and messenger (mRNA) and is involved in their export from the nucleus whereas the alternative CBC with NCBP3 does not bind snRNA and associates only with mRNA thereby playing a role only in mRNA export. The sequence is that of Nuclear cap-binding protein subunit 1-A (ncbp1-a) from Xenopus laevis (African clawed frog).